A 463-amino-acid chain; its full sequence is Glycine--tRNA ligase (463 aa).

2 residues coordinate substrate: Arg-98 and Glu-174. Residues 206–208 (RNE), 216–221 (FRTREF), 290–291 (EL), and 334–337 (GADR) contribute to the ATP site. 221–225 (FEQME) contacts substrate. A substrate-binding site is contributed by 330 to 334 (EPSLG).

This sequence belongs to the class-II aminoacyl-tRNA synthetase family. In terms of assembly, homodimer.

It localises to the cytoplasm. The enzyme catalyses tRNA(Gly) + glycine + ATP = glycyl-tRNA(Gly) + AMP + diphosphate. Its function is as follows. Catalyzes the attachment of glycine to tRNA(Gly). This chain is Glycine--tRNA ligase, found in Staphylococcus epidermidis (strain ATCC 35984 / DSM 28319 / BCRC 17069 / CCUG 31568 / BM 3577 / RP62A).